The primary structure comprises 111 residues: Distal membrane-arm assembly complex protein 1 (111 aa).

Positions 1-11 are enriched in polar residues; the sequence is MGSSFSGSTEF. The segment at 1-40 is disordered; it reads MGSSFSGSTEFSAPAPPTVSTAVPANPPAKSAVPASPARD. Residues 18 to 38 show a composition bias toward low complexity; that stretch reads TVSTAVPANPPAKSAVPASPA. Transmembrane regions (helical) follow at residues 51–68 and 81–101; these read VLSGSTLFGAGTYVYLVA and GTVLQMVIGISIACWGVVVLV.

Interacts with incompletely assembled mitochondrial NADH:ubiquinone oxidoreductase complex (complex I).

The protein resides in the mitochondrion inner membrane. Its function is as follows. Required for the assembly of the mitochondrial NADH:ubiquinone oxidoreductase complex (complex I). Involved in the assembly of the distal region of complex I. The protein is Distal membrane-arm assembly complex protein 1 of Mus musculus (Mouse).